A 341-amino-acid chain; its full sequence is UDP-3-O-acylglucosamine N-acyltransferase (341 aa).

His-239 serves as the catalytic Proton acceptor.

This sequence belongs to the transferase hexapeptide repeat family. LpxD subfamily. As to quaternary structure, homotrimer.

It carries out the reaction a UDP-3-O-[(3R)-3-hydroxyacyl]-alpha-D-glucosamine + a (3R)-hydroxyacyl-[ACP] = a UDP-2-N,3-O-bis[(3R)-3-hydroxyacyl]-alpha-D-glucosamine + holo-[ACP] + H(+). It functions in the pathway bacterial outer membrane biogenesis; LPS lipid A biosynthesis. Its function is as follows. Catalyzes the N-acylation of UDP-3-O-acylglucosamine using 3-hydroxyacyl-ACP as the acyl donor. Is involved in the biosynthesis of lipid A, a phosphorylated glycolipid that anchors the lipopolysaccharide to the outer membrane of the cell. The protein is UDP-3-O-acylglucosamine N-acyltransferase of Idiomarina loihiensis (strain ATCC BAA-735 / DSM 15497 / L2-TR).